The following is a 174-amino-acid chain: Ribosome maturation factor RimM (174 aa).

One can recognise a PRC barrel domain in the interval 91 to 164; sequence DDAWYPHQLQ…KVVLSPPGGL (74 aa).

This sequence belongs to the RimM family. Binds ribosomal protein uS19.

It localises to the cytoplasm. Functionally, an accessory protein needed during the final step in the assembly of 30S ribosomal subunit, possibly for assembly of the head region. Essential for efficient processing of 16S rRNA. May be needed both before and after RbfA during the maturation of 16S rRNA. It has affinity for free ribosomal 30S subunits but not for 70S ribosomes. The sequence is that of Ribosome maturation factor RimM from Kineococcus radiotolerans (strain ATCC BAA-149 / DSM 14245 / SRS30216).